Here is a 149-residue protein sequence, read N- to C-terminus: Large ribosomal subunit protein uL15 (149 aa).

The disordered stretch occupies residues 1–64 (MVELHDLQPH…GQTPLYMRIP (64 aa)). Positions 31-40 (TAGRGHKGQK) are enriched in basic residues.

Belongs to the universal ribosomal protein uL15 family. In terms of assembly, part of the 50S ribosomal subunit.

Binds to the 23S rRNA. The protein is Large ribosomal subunit protein uL15 of Aquifex aeolicus (strain VF5).